The primary structure comprises 406 residues: Purine nucleoside permease (406 aa).

A signal peptide spans 1–22; that stretch reads MKLSTLFTLATTISTLTTFTIA.

Belongs to the NUP family.

Mammalian nucleoside transport inhibitors dipyridamole and NBMPR inhibit adenosine transport by NUP. Nucleoside permease that transports adenosine and guanosine. Does not show any transport activities towards cytidine, adenine, guanine, uridine, and uracil. The polypeptide is Purine nucleoside permease (Candida albicans (Yeast)).